Reading from the N-terminus, the 981-residue chain is uncharacterized protein (981 aa).

The Carrier domain occupies 535-612; that stretch reads VLLNPVAIEI…SIASIIQKKS (78 aa). Ser571 is subject to O-(pantetheine 4'-phosphoryl)serine.

It belongs to the ATP-dependent AMP-binding enzyme family.

This is an uncharacterized protein from Schizosaccharomyces pombe (strain 972 / ATCC 24843) (Fission yeast).